We begin with the raw amino-acid sequence, 390 residues long: Succinate--CoA ligase [ADP-forming] subunit beta (390 aa).

Residues 9–245 (KHLLKKYNIP…TTQEDEHETM (237 aa)) enclose the ATP-grasp domain. ATP contacts are provided by residues Lys46, 53–55 (GRG), Glu99, Ser102, and Glu107. 2 residues coordinate Mg(2+): Asn200 and Asp214. Substrate is bound by residues Asn265 and 322-324 (GIV).

Belongs to the succinate/malate CoA ligase beta subunit family. In terms of assembly, heterotetramer of two alpha and two beta subunits. Requires Mg(2+) as cofactor.

It catalyses the reaction succinate + ATP + CoA = succinyl-CoA + ADP + phosphate. The catalysed reaction is GTP + succinate + CoA = succinyl-CoA + GDP + phosphate. It participates in carbohydrate metabolism; tricarboxylic acid cycle; succinate from succinyl-CoA (ligase route): step 1/1. Functionally, succinyl-CoA synthetase functions in the citric acid cycle (TCA), coupling the hydrolysis of succinyl-CoA to the synthesis of either ATP or GTP and thus represents the only step of substrate-level phosphorylation in the TCA. The beta subunit provides nucleotide specificity of the enzyme and binds the substrate succinate, while the binding sites for coenzyme A and phosphate are found in the alpha subunit. The chain is Succinate--CoA ligase [ADP-forming] subunit beta from Coxiella burnetii (strain CbuK_Q154) (Coxiella burnetii (strain Q154)).